The sequence spans 232 residues: MKLVWLGHSAFRVELDGAVILIDPFLSGNPKFNGSVAEASAGATHIVLTHGHDDHIGDAPDIAKATGAQIVANFEVCMFLNGKGAENINPGNTGGSIDCGAFVVSLTQALHSSGTTENGQSIYLGNPNGVVITPKQGPTLYHMGDTEIFSDMALIAEIYNPQIGIVPIGDRFTMGAKTAALAVRRYFKFDAVVPCHYGTFGLLDQSPDAFIAALGGSGVKVDAPAIGGHMIY.

It belongs to the UPF0173 family.

This is UPF0173 metal-dependent hydrolase Msil_0741 from Methylocella silvestris (strain DSM 15510 / CIP 108128 / LMG 27833 / NCIMB 13906 / BL2).